The sequence spans 581 residues: Arginine--tRNA ligase (581 aa).

The short motif at 126 to 136 (PNLAKEMHVGH) is the 'HIGH' region element.

This sequence belongs to the class-I aminoacyl-tRNA synthetase family. Monomer.

The protein resides in the cytoplasm. The enzyme catalyses tRNA(Arg) + L-arginine + ATP = L-arginyl-tRNA(Arg) + AMP + diphosphate. This Shewanella baltica (strain OS223) protein is Arginine--tRNA ligase.